The following is a 294-amino-acid chain: MHNTTKRVTVPALEEILYEPIKVLDYGFIRVIDYMGDDSAIVQAARVSYGKGTKQLNQDKGLINYLLRHYHTTPFEMCDIKFHIKLPIFIARQWIRHRTASVNEYSARYSILGNEFYLPEPANIASQSAVNKQCREGDSLPKEVAEKVLAILEEDARQCYGHYKELMNADEEGNIIDENATGIARELARMNLTLNYYTEWYWKINLHNLLHFLRLRADPHAQYEIRVYAEKMLEIVKAWVPFVYEAFEEYRLQGANISRKGLDVIKRMINGEKVTHETSDMTKREWEELMKIFG.

Residues 27-250 enclose the ThyX domain; sequence GFIRVIDYMG…PFVYEAFEEY (224 aa). FAD-binding positions include Thr-73, 96–98, and Glu-104; that span reads RHR. DUMP contacts are provided by residues 93-96, 104-108, and Arg-189; these read QWIR and EYSAR. A ThyX motif motif is present at residues 96 to 106; the sequence is RHRTASVNEYS. FAD-binding positions include 205–207 and His-211; that span reads NLH. Arg-216 lines the dUMP pocket. Catalysis depends on Arg-216, which acts as the Involved in ionization of N3 of dUMP, leading to its activation.

Belongs to the thymidylate synthase ThyX family. As to quaternary structure, homotetramer. The cofactor is FAD.

The catalysed reaction is dUMP + (6R)-5,10-methylene-5,6,7,8-tetrahydrofolate + NADPH + H(+) = dTMP + (6S)-5,6,7,8-tetrahydrofolate + NADP(+). Its pathway is pyrimidine metabolism; dTTP biosynthesis. Its function is as follows. Catalyzes the reductive methylation of 2'-deoxyuridine-5'-monophosphate (dUMP) to 2'-deoxythymidine-5'-monophosphate (dTMP) while utilizing 5,10-methylenetetrahydrofolate (mTHF) as the methyl donor, and NADPH and FADH(2) as the reductant. This Rickettsia conorii (strain ATCC VR-613 / Malish 7) protein is Flavin-dependent thymidylate synthase.